We begin with the raw amino-acid sequence, 310 residues long: tRNA-cytidine(32) 2-sulfurtransferase (310 aa).

The short motif at 48–53 (SGGKDS) is the PP-loop motif element. [4Fe-4S] cluster contacts are provided by cysteine 123, cysteine 126, and cysteine 214.

It belongs to the TtcA family. Homodimer. It depends on Mg(2+) as a cofactor. [4Fe-4S] cluster serves as cofactor.

Its subcellular location is the cytoplasm. It carries out the reaction cytidine(32) in tRNA + S-sulfanyl-L-cysteinyl-[cysteine desulfurase] + AH2 + ATP = 2-thiocytidine(32) in tRNA + L-cysteinyl-[cysteine desulfurase] + A + AMP + diphosphate + H(+). It participates in tRNA modification. Catalyzes the ATP-dependent 2-thiolation of cytidine in position 32 of tRNA, to form 2-thiocytidine (s(2)C32). The sulfur atoms are provided by the cysteine/cysteine desulfurase (IscS) system. This chain is tRNA-cytidine(32) 2-sulfurtransferase, found in Vibrio vulnificus (strain CMCP6).